The primary structure comprises 111 residues: Putative G antigen family E member 3 (111 aa).

The disordered stretch occupies residues 1–67 (MSEHVRTRSQ…EGAPAVQGPD (67 aa)). The segment covering 8-24 (RSQSSERGNDQESSQPV) has biased composition (polar residues). Threonine 97 carries the post-translational modification Phosphothreonine.

It belongs to the GAGE family.

The sequence is that of Putative G antigen family E member 3 (PAGE2B) from Homo sapiens (Human).